We begin with the raw amino-acid sequence, 622 residues long: Low affinity potassium transport system protein Kup (622 aa).

12 helical membrane passes run 9–29 (LSAITLAAIGVVYGDIGTSPL), 49–69 (VFGFLSLIFWLLIFVVSIKYL), 103–123 (VIMGLIGGSFFYGEVVITPAI), 137–157 (PELDTWVVPLSIIVLTLLFMI), 165–185 (VGKLFAPIMLTWFLILAGLGL), 213–233 (VSFIALGAVVLSITGVEALYA), 247–267 (WFSVVLPSLTLNYFGQGALLL), 276–296 (PFFLLAPEWALIPLLILAALA), 337–357 (IYIPFVNWMLYFAVVIVIVSF), 363–383 (LAAAYGIAVTGTMVLTSILST), 396–416 (FVALILVAFLCVDVPLFSANL), and 419–439 (LLSGGWLPLTLGIVMFIIMTT).

The protein belongs to the HAK/KUP transporter (TC 2.A.72) family.

The protein localises to the cell inner membrane. The enzyme catalyses K(+)(in) + H(+)(in) = K(+)(out) + H(+)(out). In terms of biological role, responsible for the low-affinity transport of potassium into the cell. Likely operates as a K(+):H(+) symporter. In Citrobacter koseri (strain ATCC BAA-895 / CDC 4225-83 / SGSC4696), this protein is Low affinity potassium transport system protein Kup.